Consider the following 369-residue polypeptide: MLYYLLQYINELFDPPGFGVIEYITFRASAAAITSLLITILAGPKLIGYLKSKYIEPVKEEAPPEHRQKRKELPTMGGTLIIFSVVVSGLLWAKFNDPYVWLILLSILWMGTIGFIDDYRKVVLKIKGGLSAKYKLIGQVSLGLFIGFYTRFDPAFSVLLTETTIPFFKDLMIDYGWWYIPVVVFIITAVSNAVNLTDGLDGLAAGTSGIVVFGLGGFAYLTGNAVYSEYLNIAFIPGGGEVAVVSMAIVMACVGFLWFNSHPAEIFMGDTGSLALGSAIAVIALLIKKELLLPVLAGTFLLETLSVSLQVTWFKFTKWRFGEGRRIFLMAPLHHHYQMKGWAEEKIVIRFWIITLLFFLASLMTLKLR.

A run of 10 helical transmembrane segments spans residues alanine 30–leucine 50, leucine 73–alanine 93, tyrosine 99–tyrosine 119, valine 140–leucine 160, leucine 171–serine 191, glycine 202–threonine 222, glycine 239–phenylalanine 259, isoleucine 266–leucine 286, leucine 291–valine 311, and lysine 346–leucine 366.

This sequence belongs to the glycosyltransferase 4 family. MraY subfamily. Requires Mg(2+) as cofactor.

It localises to the cell inner membrane. The catalysed reaction is UDP-N-acetyl-alpha-D-muramoyl-L-alanyl-gamma-D-glutamyl-meso-2,6-diaminopimeloyl-D-alanyl-D-alanine + di-trans,octa-cis-undecaprenyl phosphate = di-trans,octa-cis-undecaprenyl diphospho-N-acetyl-alpha-D-muramoyl-L-alanyl-D-glutamyl-meso-2,6-diaminopimeloyl-D-alanyl-D-alanine + UMP. It participates in cell wall biogenesis; peptidoglycan biosynthesis. Its function is as follows. Catalyzes the initial step of the lipid cycle reactions in the biosynthesis of the cell wall peptidoglycan: transfers peptidoglycan precursor phospho-MurNAc-pentapeptide from UDP-MurNAc-pentapeptide onto the lipid carrier undecaprenyl phosphate, yielding undecaprenyl-pyrophosphoryl-MurNAc-pentapeptide, known as lipid I. The polypeptide is Phospho-N-acetylmuramoyl-pentapeptide-transferase (Chlorobium phaeobacteroides (strain BS1)).